Reading from the N-terminus, the 576-residue chain is Proline--tRNA ligase (576 aa).

This sequence belongs to the class-II aminoacyl-tRNA synthetase family. ProS type 1 subfamily. As to quaternary structure, homodimer.

It localises to the cytoplasm. The enzyme catalyses tRNA(Pro) + L-proline + ATP = L-prolyl-tRNA(Pro) + AMP + diphosphate. In terms of biological role, catalyzes the attachment of proline to tRNA(Pro) in a two-step reaction: proline is first activated by ATP to form Pro-AMP and then transferred to the acceptor end of tRNA(Pro). As ProRS can inadvertently accommodate and process non-cognate amino acids such as alanine and cysteine, to avoid such errors it has two additional distinct editing activities against alanine. One activity is designated as 'pretransfer' editing and involves the tRNA(Pro)-independent hydrolysis of activated Ala-AMP. The other activity is designated 'posttransfer' editing and involves deacylation of mischarged Ala-tRNA(Pro). The misacylated Cys-tRNA(Pro) is not edited by ProRS. The sequence is that of Proline--tRNA ligase from Bordetella petrii (strain ATCC BAA-461 / DSM 12804 / CCUG 43448).